A 412-amino-acid polypeptide reads, in one-letter code: Vacuolar calcium ion transporter (412 aa).

The Cytoplasmic portion of the chain corresponds to 1 to 55 (MIERLKIAKNRLEAMNSFNFPAQDRHERAPLLGSEYDHSMARQLSLLNVVGMTKS). Residues 56–76 (VLMSSYFNLMLVFVPIGLIAG) traverse the membrane as a helical segment. Residues 77–83 (WFEWNAK) lie on the Lumenal side of the membrane. A helical transmembrane segment spans residues 84 to 104 (SVFILNMLAIIPLASLLSFAT). The Cytoplasmic portion of the chain corresponds to 105-114 (EQLSIISGPT). The helical transmembrane segment at 115–135 (LGALLNASFGNAIELIVGVLA) threads the bilayer. At 136–148 (LKRGELRIVQSSL) the chain is on the lumenal side. The helical transmembrane segment at 149-169 (LGSILSNLLLVFGMCLVTTGI) threads the bilayer. Residues 170–177 (RREITTFN) are Cytoplasmic-facing. Residues 178–198 (ITVAQTMIAMLALSTATILIP) traverse the membrane as a helical segment. Residues 199–215 (ATFHYSLPDNANSENAL) are Lumenal-facing. The chain crosses the membrane as a helical span at residues 216-236 (LHVSRGTAVIVLIVYVLLLVF). Residues 237 to 264 (QLKTHKHVCHDPSEVEEETEPRILGLRS) lie on the Cytoplasmic side of the membrane. The chain crosses the membrane as a helical span at residues 265 to 285 (SIAMLAIVTVFVSLCADYLVG). The Lumenal portion of the chain corresponds to 286-299 (SIDQLVEEVNISKT). Residues 300 to 320 (FVGLVILPVVGNAAEHVTAIV) traverse the membrane as a helical segment. Residues 321–334 (VSYRGQMDLALGVA) are Cytoplasmic-facing. Residues 335–355 (IGSSIQIALFLAPFLVIVGWI) traverse the membrane as a helical segment. Topologically, residues 356–358 (ISQ) are lumenal. Residues 359 to 379 (PLTLYFESLETVILFVSVFLV) form a helical membrane-spanning segment. Topologically, residues 380-389 (NYLIQDGATH) are cytoplasmic. A helical transmembrane segment spans residues 390–410 (WLEGVQLLALYAIVVLAFFYY). Residues 411 to 412 (PQ) lie on the Lumenal side of the membrane.

The protein belongs to the Ca(2+):cation antiporter (CaCA) (TC 2.A.19) family.

The protein localises to the vacuole membrane. The protein resides in the endoplasmic reticulum membrane. Has a role in promoting intracellular calcium ion sequestration via the exchange of calcium ions for hydrogen ions across the vacuolar membrane. Involved also in manganese ion homeostasis via its uptake into the vacuole. In Schizosaccharomyces pombe (strain 972 / ATCC 24843) (Fission yeast), this protein is Vacuolar calcium ion transporter (vcx1).